Reading from the N-terminus, the 641-residue chain is Sodium-dependent nutrient amino acid transporter 1 (641 aa).

Positions 1 to 34 (MELKGVQPSNGSANGNGTTNAASTEKADTEKQTA) are disordered. Topologically, residues 1-38 (MELKGVQPSNGSANGNGTTNAASTEKADTEKQTAERTN) are cytoplasmic. A compositionally biased stretch (low complexity) spans 9-24 (SNGSANGNGTTNAAST). Basic and acidic residues predominate over residues 25 to 34 (EKADTEKQTA). The next 3 membrane-spanning stretches (helical) occupy residues 39–59 (WGNG…LGNV), 72–92 (GAFL…MYYL), and 109–129 (SVVP…ICII). N-linked (GlcNAc...) asparagine glycosylation is found at Asn183 and Asn188. 9 helical membrane-spanning segments follow: residues 229-249 (PDWK…LVIM), 258-278 (AAYF…IRAV), 307-327 (AVVQ…MFAS), 341-361 (IVTT…FAIL), 401-421 (LFSV…IVAL), 441-461 (VALI…TPGG), 474-494 (TYVV…VYGL), 516-536 (CWSF…MATI), and 552-572 (IAGW…GLWY).

It belongs to the sodium:neurotransmitter symporter (SNF) (TC 2.A.22) family.

The protein localises to the membrane. Unusual broad substrate spectrum amino acid:sodium cotransporter that promotes absorption of the D isomers of essential amino acids. Neutral amino acids are the preferred substrates, especially methionine and phenylalanine. This Drosophila yakuba (Fruit fly) protein is Sodium-dependent nutrient amino acid transporter 1.